The sequence spans 150 residues: D-aminoacyl-tRNA deacylase (150 aa).

The Gly-cisPro motif, important for rejection of L-amino acids motif lies at 137–138 (GP).

The protein belongs to the DTD family. In terms of assembly, homodimer.

The protein resides in the cytoplasm. The enzyme catalyses glycyl-tRNA(Ala) + H2O = tRNA(Ala) + glycine + H(+). It catalyses the reaction a D-aminoacyl-tRNA + H2O = a tRNA + a D-alpha-amino acid + H(+). Its function is as follows. An aminoacyl-tRNA editing enzyme that deacylates mischarged D-aminoacyl-tRNAs. Also deacylates mischarged glycyl-tRNA(Ala), protecting cells against glycine mischarging by AlaRS. Acts via tRNA-based rather than protein-based catalysis; rejects L-amino acids rather than detecting D-amino acids in the active site. By recycling D-aminoacyl-tRNA to D-amino acids and free tRNA molecules, this enzyme counteracts the toxicity associated with the formation of D-aminoacyl-tRNA entities in vivo and helps enforce protein L-homochirality. This is D-aminoacyl-tRNA deacylase from Geotalea daltonii (strain DSM 22248 / JCM 15807 / FRC-32) (Geobacter daltonii).